The primary structure comprises 297 residues: Molybdate/tungstate import ATP-binding protein WtpC (297 aa).

The region spanning 2–226 is the ABC transporter domain; the sequence is LKVNNLSKIW…PKNKKVAEFL (225 aa). 32–39 contacts ATP; it reads GPSGAGKS.

Belongs to the ABC transporter superfamily. Sulfate/tungstate importer (TC 3.A.1.6) family. As to quaternary structure, the complex is composed of two ATP-binding proteins (WtpC), two transmembrane proteins (WtpB) and a solute-binding protein (WtpA).

Its subcellular location is the cell membrane. The enzyme catalyses tungstate(in) + ATP + H2O = tungstate(out) + ADP + phosphate + H(+). In terms of biological role, part of the ABC transporter complex WtpABC involved in molybdate/tungstate import. Responsible for energy coupling to the transport system. In Methanocaldococcus jannaschii (strain ATCC 43067 / DSM 2661 / JAL-1 / JCM 10045 / NBRC 100440) (Methanococcus jannaschii), this protein is Molybdate/tungstate import ATP-binding protein WtpC (wtpC).